The sequence spans 433 residues: tRNA-2-methylthio-N(6)-dimethylallyladenosine synthase (433 aa).

In terms of domain architecture, MTTase N-terminal spans 4–119 (KKLFIQTLGC…ITQAIKTPKF (116 aa)). Residues Cys13, Cys50, Cys82, Cys151, Cys155, and Cys158 each coordinate [4Fe-4S] cluster. The 234-residue stretch at 137–370 (RNSIYKSYIN…QNRHSEILDE (234 aa)) folds into the Radical SAM core domain. Residues 373-433 (KKQENKTFKV…KRMVLYGEIV (61 aa)) form the TRAM domain.

It belongs to the methylthiotransferase family. MiaB subfamily. As to quaternary structure, monomer. It depends on [4Fe-4S] cluster as a cofactor.

It is found in the cytoplasm. The enzyme catalyses N(6)-dimethylallyladenosine(37) in tRNA + (sulfur carrier)-SH + AH2 + 2 S-adenosyl-L-methionine = 2-methylsulfanyl-N(6)-dimethylallyladenosine(37) in tRNA + (sulfur carrier)-H + 5'-deoxyadenosine + L-methionine + A + S-adenosyl-L-homocysteine + 2 H(+). In terms of biological role, catalyzes the methylthiolation of N6-(dimethylallyl)adenosine (i(6)A), leading to the formation of 2-methylthio-N6-(dimethylallyl)adenosine (ms(2)i(6)A) at position 37 in tRNAs that read codons beginning with uridine. This chain is tRNA-2-methylthio-N(6)-dimethylallyladenosine synthase, found in Campylobacter jejuni (strain RM1221).